Consider the following 380-residue polypeptide: Probable polyglutamine synthesis accessory protein MT0602 (380 aa).

This sequence belongs to the CapA family.

In terms of biological role, could be involved in the biosynthesis, transport or localization of poly-alpha-L-glutamine (PLG), a cell wall component. Contributes to stress tolerance and virulence. This is Probable polyglutamine synthesis accessory protein MT0602 from Mycobacterium tuberculosis (strain CDC 1551 / Oshkosh).